We begin with the raw amino-acid sequence, 533 residues long: Histone-arginine methyltransferase CARMER (533 aa).

Positions 143-452 constitute an SAM-dependent MTase PRMT-type domain; it reads ASQYFQFYGY…QSYDVTIDLH (310 aa). Residues Gln-156, Arg-165, Gly-189, Glu-211, Glu-240, and Thr-268 each contribute to the S-adenosyl-L-methionine site. Position 503 is an asymmetric dimethylarginine; by autocatalysis (Arg-503).

It belongs to the class I-like SAM-binding methyltransferase superfamily. Protein arginine N-methyltransferase family. As to quaternary structure, homodimer. Post-translationally, the dimethylated protein is the major form.

The protein resides in the cytoplasm. Its subcellular location is the nucleus. It catalyses the reaction L-arginyl-[protein] + 2 S-adenosyl-L-methionine = N(omega),N(omega)-dimethyl-L-arginyl-[protein] + 2 S-adenosyl-L-homocysteine + 2 H(+). Functionally, methylates (mono- and asymmetric dimethylation) the guanidino nitrogens of arginyl residues in proteins. May methylate histone H3 at 'Arg-17' and activate transcription via chromatin remodeling. In Drosophila willistoni (Fruit fly), this protein is Histone-arginine methyltransferase CARMER (Art4).